Here is a 573-residue protein sequence, read N- to C-terminus: Delta 8-(E)-sphingolipid desaturase (573 aa).

Residues 2–77 form the Cytochrome b5 heme-binding domain; the sequence is SRVLSRRDIA…FKIWKIGRID (76 aa). The heme site is built by His-37 and His-60. Residues 228–248 traverse the membrane as a helical segment; it reads LFGISFYLLSLKWFAISAICL. Residues 260–264 carry the Histidine box-1 motif; sequence HDAGH. The helical transmembrane segment at 273–293 threads the bilayer; sequence VDNIIGMTVASWIGGLSLGWW. A Histidine box-2 motif is present at residues 297 to 301; sequence HDVHH. Transmembrane regions (helical) follow at residues 353 to 372, 393 to 413, and 422 to 442; these read YLYYPILCFGRFNLYRLSWM, LAELSFFNYWFFYLIIYKQMP, and VMISHIATMIVHVQITLSHFA. Residues 481–485 carry the Histidine box-3 motif; it reads QVIHH.

Belongs to the fatty acid desaturase type 1 family.

It localises to the membrane. The catalysed reaction is an N-acylsphing-4-enine + 2 Fe(II)-[cytochrome b5] + O2 + 2 H(+) = a (4E,8E)-4-sphinga-4,8-dienine ceramide + 2 Fe(III)-[cytochrome b5] + 2 H2O. Its pathway is lipid metabolism; sphingolipid metabolism. Functionally, delta(8)-fatty-acid desaturase which introduces a double bond at the 8-position in the long-chain base (LCB) of ceramides. Required for the formation of the di-unsaturated sphingoid base (E,E)-sphinga-4,8-dienine during glucosylceramide (GluCer) biosynthesis. This chain is Delta 8-(E)-sphingolipid desaturase, found in Kluyveromyces lactis (Yeast).